Here is a 209-residue protein sequence, read N- to C-terminus: Large ribosomal subunit protein uL4 (209 aa).

Residues 46-71 (GTSSTKTRSEVRGSSKKPWKQKGTGR) are disordered. A compositionally biased stretch (basic residues) spans 59 to 71 (SSKKPWKQKGTGR).

The protein belongs to the universal ribosomal protein uL4 family. Part of the 50S ribosomal subunit.

In terms of biological role, one of the primary rRNA binding proteins, this protein initially binds near the 5'-end of the 23S rRNA. It is important during the early stages of 50S assembly. It makes multiple contacts with different domains of the 23S rRNA in the assembled 50S subunit and ribosome. Forms part of the polypeptide exit tunnel. This Borrelia garinii subsp. bavariensis (strain ATCC BAA-2496 / DSM 23469 / PBi) (Borreliella bavariensis) protein is Large ribosomal subunit protein uL4.